The primary structure comprises 185 residues: Large ribosomal subunit protein uL22 (185 aa).

The segment at 157–185 (VAAPSPEEDAPKKKQSKKKMARQKLMQRD) is disordered. Residues 169–178 (KKQSKKKMAR) show a composition bias toward basic residues.

It belongs to the universal ribosomal protein uL22 family.

This chain is Large ribosomal subunit protein uL22 (RpL17), found in Ixodes scapularis (Black-legged tick).